A 62-amino-acid polypeptide reads, in one-letter code: uncharacterized protein (62 aa).

Positions 38–62 are disordered; sequence VKSESDTADSKRSAEAKADEAPAKM.

This is an uncharacterized protein from Schizosaccharomyces pombe (strain 972 / ATCC 24843) (Fission yeast).